The chain runs to 332 residues: Anthranilate phosphoribosyltransferase (332 aa).

5-phospho-alpha-D-ribose 1-diphosphate contacts are provided by residues Gly-78, 81–82, Thr-86, 88–91, 106–114, and Ala-118; these read GD, NVST, and KHGNRAASS. Gly-78 serves as a coordination point for anthranilate. A Mg(2+)-binding site is contributed by Ser-90. Asn-109 serves as a coordination point for anthranilate. Arg-164 is a binding site for anthranilate. Mg(2+) contacts are provided by Asp-223 and Glu-224.

This sequence belongs to the anthranilate phosphoribosyltransferase family. In terms of assembly, homodimer. It depends on Mg(2+) as a cofactor.

It carries out the reaction N-(5-phospho-beta-D-ribosyl)anthranilate + diphosphate = 5-phospho-alpha-D-ribose 1-diphosphate + anthranilate. It participates in amino-acid biosynthesis; L-tryptophan biosynthesis; L-tryptophan from chorismate: step 2/5. Its function is as follows. Catalyzes the transfer of the phosphoribosyl group of 5-phosphorylribose-1-pyrophosphate (PRPP) to anthranilate to yield N-(5'-phosphoribosyl)-anthranilate (PRA). The protein is Anthranilate phosphoribosyltransferase of Sphingopyxis alaskensis (strain DSM 13593 / LMG 18877 / RB2256) (Sphingomonas alaskensis).